The sequence spans 835 residues: Leucine--tRNA ligase (835 aa).

The 'HIGH' region motif lies at Pro-36–His-46. Positions Lys-602–Ser-606 match the 'KMSKS' region motif. Lys-605 provides a ligand contact to ATP.

This sequence belongs to the class-I aminoacyl-tRNA synthetase family.

The protein resides in the cytoplasm. The enzyme catalyses tRNA(Leu) + L-leucine + ATP = L-leucyl-tRNA(Leu) + AMP + diphosphate. The protein is Leucine--tRNA ligase of Rickettsia massiliae (strain Mtu5).